Consider the following 767-residue polypeptide: U3 small nucleolar RNA-associated protein 14 homolog A (767 aa).

The tract at residues 23–49 (TSNYPLSASEDEGDSDGERKHQKLLEA) is disordered. Phosphoserine occurs at positions 29, 31, 37, 52, 77, and 81. Lysine 122 is covalently cross-linked (Glycyl lysine isopeptide (Lys-Gly) (interchain with G-Cter in SUMO2)). A Phosphothreonine modification is found at threonine 205. The stretch at 317–346 (LEARQAMQEQLAKNKELTQKLQVVSESEEE) forms a coiled coil. Residues 338–554 (QVVSESEEEG…SKGKNKKEQM (217 aa)) are disordered. Over residues 342–355 (ESEEEGGADEEEAL) the composition is skewed to acidic residues. Over residues 398–433 (AAHEFPENEENDKPVAEEDELLKELEKRRSLRKRSE) the composition is skewed to basic and acidic residues. Arginine 431 carries the citrulline modification. Residue lysine 447 forms a Glycyl lysine isopeptide (Lys-Gly) (interchain with G-Cter in SUMO2) linkage. The residue at position 451 (serine 451) is a Phosphoserine. Residues 486–498 (VWEEEPAPEEDEP) are compositionally biased toward acidic residues. The segment covering 503–538 (RPERMRTLEELEELGKEDSLPNKERPRPSVEGEQVR) has biased composition (basic and acidic residues). Lysine 518 participates in a covalent cross-link: Glycyl lysine isopeptide (Lys-Gly) (interchain with G-Cter in SUMO2). Arginine 586 is subject to Citrulline. Positions 730-767 (TAEDVDCRSSPRSDVPVMQSNPKQHSKHQKQRKKSSIG) are disordered. Positions 753-767 (QHSKHQKQRKKSSIG) are enriched in basic residues.

The protein belongs to the UTP14 family. In terms of assembly, interacts with DHX37. Post-translationally, citrullinated by PADI4. Ubiquitously expressed.

Its subcellular location is the nucleus. It localises to the nucleolus. In terms of biological role, may be required for ribosome biogenesis. The sequence is that of U3 small nucleolar RNA-associated protein 14 homolog A (Utp14a) from Mus musculus (Mouse).